A 254-amino-acid polypeptide reads, in one-letter code: tRNA uridine(34) hydroxylase (254 aa).

Positions 123–217 (QDPNVILLDT…YLESIPESES (95 aa)) constitute a Rhodanese domain. The active-site Cysteine persulfide intermediate is C177.

Belongs to the TrhO family.

It catalyses the reaction uridine(34) in tRNA + AH2 + O2 = 5-hydroxyuridine(34) in tRNA + A + H2O. In terms of biological role, catalyzes oxygen-dependent 5-hydroxyuridine (ho5U) modification at position 34 in tRNAs. The protein is tRNA uridine(34) hydroxylase of Legionella pneumophila (strain Paris).